A 628-amino-acid chain; its full sequence is Nuclear RNA export factor 1 (628 aa).

The disordered stretch occupies residues 47 to 83; that stretch reads DTQSRYEDDDEPAVPVRASLTSASSRGRGGSSRGFGQ. Positions 63-72 are enriched in low complexity; sequence RASLTSASSR. Positions 100–179 constitute an RRM domain; that stretch reads YKCRATGAAK…EFYTSKVPAP (80 aa). 2 LRR repeats span residues 245-270 and 271-294; these read NIVA…SIAK and FVME…FAGL. One can recognise an NTF2 domain in the interval 365-526; it reads LVEQFVTSYF…VAVISDQLFI (162 aa). The TAP-C domain maps to 576–628; sequence PIREEMIKAMCQFSGMIPPFSEKCLADCAWNFDFACQKFNEIKSSVPAEAFAH.

Belongs to the NXF family. Interacts with nucleoporins, Nup98, Nup153 and Nup214.

The protein resides in the nucleus. In terms of biological role, involved in RNA export from the nucleus to the cytoplasm. This chain is Nuclear RNA export factor 1 (nxf-1), found in Caenorhabditis elegans.